We begin with the raw amino-acid sequence, 74 residues long: DNA-directed RNA polymerase subunit omega (74 aa).

Belongs to the RNA polymerase subunit omega family. In terms of assembly, the RNAP catalytic core consists of 2 alpha, 1 beta, 1 beta' and 1 omega subunit. When a sigma factor is associated with the core the holoenzyme is formed, which can initiate transcription.

The catalysed reaction is RNA(n) + a ribonucleoside 5'-triphosphate = RNA(n+1) + diphosphate. Functionally, promotes RNA polymerase assembly. Latches the N- and C-terminal regions of the beta' subunit thereby facilitating its interaction with the beta and alpha subunits. In Solidesulfovibrio magneticus (strain ATCC 700980 / DSM 13731 / RS-1) (Desulfovibrio magneticus), this protein is DNA-directed RNA polymerase subunit omega.